Here is a 216-residue protein sequence, read N- to C-terminus: Large ribosomal subunit protein uL24m (216 aa).

A mitochondrion-targeting transit peptide spans 1–9; sequence MRLSALLAL. At serine 24 the chain carries Phosphoserine. Positions 56-89 constitute a KOW domain; sequence LFCGDRVEILEGKDAGKQGKVVQVIRQRNWVVVE.

The protein belongs to the universal ribosomal protein uL24 family. As to quaternary structure, component of the mitochondrial ribosome large subunit (39S) which comprises a 16S rRNA and about 50 distinct proteins.

It is found in the mitochondrion. The sequence is that of Large ribosomal subunit protein uL24m (MRPL24) from Bos taurus (Bovine).